The chain runs to 101 residues: Small ribosomal subunit protein uS14 (101 aa).

This sequence belongs to the universal ribosomal protein uS14 family. Part of the 30S ribosomal subunit. Contacts proteins S3 and S10.

Functionally, binds 16S rRNA, required for the assembly of 30S particles and may also be responsible for determining the conformation of the 16S rRNA at the A site. This chain is Small ribosomal subunit protein uS14, found in Burkholderia mallei (strain NCTC 10247).